A 636-amino-acid chain; its full sequence is Tumor protein p73 (636 aa).

The transactivation stretch occupies residues 1-46 (MAQSTATSPDGGTTFEHLWSSLEPDSTYFDLPQSSRGNNEVVGGTD). Residue threonine 27 is modified to Phosphothreonine; by PLK1. The residue at position 28 (tyrosine 28) is a Phosphotyrosine; by SRC and HCK. Residues 78 to 104 (RAASASPYTPEHAASVPTHSPYAQPSS) form a disordered region. The span at 94 to 104 (PTHSPYAQPSS) shows a compositional bias: polar residues. Tyrosine 99 is modified (phosphotyrosine; by ABL1). The DNA-binding stretch occupies residues 131-310 (FQQSSTAKSA…DRKADEDHYR (180 aa)). The Zn(2+) site is built by cysteine 194, histidine 197, cysteine 258, and cysteine 262. Residues 314–345 (ALNESSAKNGAASKRAFKQSPPAVPALGAGVK) form a disordered region. The interaction with HIPK2 stretch occupies residues 345–380 (KKRRHGDEDTYYLQVRGRENFEILMKLKESLELMEL). The tract at residues 345-386 (KKRRHGDEDTYYLQVRGRENFEILMKLKESLELMELVPQPLV) is oligomerization. The PPxY motif motif lies at 483 to 487 (PPPPY). The SAM domain occupies 485 to 551 (PPYHADPSLV…WRGLQDLKQG (67 aa)). Lysine 627 participates in a covalent cross-link: Glycyl lysine isopeptide (Lys-Gly) (interchain with G-Cter in SUMO); in isoform Alpha. Lysine 627 is covalently cross-linked (Glycyl lysine isopeptide (Lys-Gly) (interchain with G-Cter in SUMO2)).

Belongs to the p53 family. As to quaternary structure, found in a complex with p53/TP53 and CABLES1. The C-terminal oligomerization domain binds to the ABL1 tyrosine kinase SH3 domain. Interacts with HECW2. Isoform Beta interacts homotypically and with p53/TP53, whereas isoform Alpha does not. Isoform Gamma interacts homotypically and with all p73 isoforms. Isoform Delta interacts with isoform Gamma, isoform Alpha, and homotypically. Isoforms Alpha and Beta interact with HIPK2. Isoform Alpha interacts with RANBP9. Isoform Beta interacts with WWOX. Interacts (via SAM domain) with FBXO45 (via B30.2/SPRY domain). Interacts with YAP1 (phosphorylated form). Interacts with HCK (via SH3 domain); this inhibits TP73 activity and degradation. Interacts (via SAM domain) with NQO1; this interaction is NADH-dependent, stabilizes TP73 in response to oxidative stress and protects it from ubiquitin-independent degradation by the 20S proteasome. In terms of assembly, (Microbial infection) Interacts with Epstein-Barr virus protein EBNA6; this interaction inhibits TP73-mediated apoptotic pathway. It depends on Zn(2+) as a cofactor. In terms of processing, isoform alpha (but not isoform beta) is sumoylated on Lys-627, which potentiates proteasomal degradation but does not affect transcriptional activity. Phosphorylation by PLK1 and PLK3 inhibits the transcription regulator activity and pro-apoptotic function. Higher levels of phosphorylation seen in the brain from patients with Huntington disease. Post-translationally, polyubiquitinated by RCHY1/PIRH2; leading to its degradation by the proteasome. Expressed in striatal neurons of patients with Huntington disease (at protein level). Brain, kidney, placenta, colon, heart, liver, spleen, skeletal muscle, prostate, thymus and pancreas. Highly expressed in fetal tissue. Expressed in the respiratory epithelium.

The protein localises to the nucleus. Its subcellular location is the cytoplasm. Functionally, participates in the apoptotic response to DNA damage. Isoforms containing the transactivation domain are pro-apoptotic, isoforms lacking the domain are anti-apoptotic and block the function of p53 and transactivating p73 isoforms. May be a tumor suppressor protein. Is an activator of FOXJ1 expression. It is an essential factor for the positive regulation of lung ciliated cell differentiation. This chain is Tumor protein p73 (TP73), found in Homo sapiens (Human).